Consider the following 472-residue polypeptide: Aspartyl/glutamyl-tRNA(Asn/Gln) amidotransferase subunit B (472 aa).

This sequence belongs to the GatB/GatE family. GatB subfamily. As to quaternary structure, heterotrimer of A, B and C subunits.

The enzyme catalyses L-glutamyl-tRNA(Gln) + L-glutamine + ATP + H2O = L-glutaminyl-tRNA(Gln) + L-glutamate + ADP + phosphate + H(+). It catalyses the reaction L-aspartyl-tRNA(Asn) + L-glutamine + ATP + H2O = L-asparaginyl-tRNA(Asn) + L-glutamate + ADP + phosphate + 2 H(+). Allows the formation of correctly charged Asn-tRNA(Asn) or Gln-tRNA(Gln) through the transamidation of misacylated Asp-tRNA(Asn) or Glu-tRNA(Gln) in organisms which lack either or both of asparaginyl-tRNA or glutaminyl-tRNA synthetases. The reaction takes place in the presence of glutamine and ATP through an activated phospho-Asp-tRNA(Asn) or phospho-Glu-tRNA(Gln). This Campylobacter jejuni subsp. jejuni serotype O:6 (strain 81116 / NCTC 11828) protein is Aspartyl/glutamyl-tRNA(Asn/Gln) amidotransferase subunit B.